Reading from the N-terminus, the 254-residue chain is Alcohol dehydrogenase (254 aa).

Position 10 to 33 (Phe10 to Leu33) interacts with NAD(+). Position 138 (Ser138) interacts with substrate. Catalysis depends on Tyr151, which acts as the Proton acceptor.

It belongs to the short-chain dehydrogenases/reductases (SDR) family. Homodimer.

It carries out the reaction a primary alcohol + NAD(+) = an aldehyde + NADH + H(+). It catalyses the reaction a secondary alcohol + NAD(+) = a ketone + NADH + H(+). This is Alcohol dehydrogenase (Adh) from Drosophila subobscura (Fruit fly).